Consider the following 100-residue polypeptide: NADH-quinone oxidoreductase subunit K (100 aa).

Transmembrane regions (helical) follow at residues 4-24 (LQHGLILAAILFVLGLTGLVI), 28-48 (LLFMLIGLEIMINASALAFVV), and 60-80 (VMYILAISLAAAEASIGLALL).

The protein belongs to the complex I subunit 4L family. NDH-1 is composed of 13 different subunits. Subunits NuoA, H, J, K, L, M, N constitute the membrane sector of the complex.

The protein localises to the cell inner membrane. The enzyme catalyses a quinone + NADH + 5 H(+)(in) = a quinol + NAD(+) + 4 H(+)(out). In terms of biological role, NDH-1 shuttles electrons from NADH, via FMN and iron-sulfur (Fe-S) centers, to quinones in the respiratory chain. The immediate electron acceptor for the enzyme in this species is believed to be ubiquinone. Couples the redox reaction to proton translocation (for every two electrons transferred, four hydrogen ions are translocated across the cytoplasmic membrane), and thus conserves the redox energy in a proton gradient. This chain is NADH-quinone oxidoreductase subunit K, found in Citrobacter koseri (strain ATCC BAA-895 / CDC 4225-83 / SGSC4696).